The chain runs to 81 residues: MQPIQIAIVALVVAIIIAIVVWSIVIIEYRKILRQRKIDRLIDRLIERAEDSGNESEGEISALVEMGVEMGHHAPWDVDDL.

Topologically, residues Met-1–Ile-6 are extracellular. Residues Ala-7–Ile-27 traverse the membrane as a helical segment. Residues Glu-28 to Leu-81 are Cytoplasmic-facing. Residues Ser-52 and Ser-56 each carry the phosphoserine; by host CK2 modification.

This sequence belongs to the HIV-1 VPU protein family. As to quaternary structure, homopentamer. Interacts with host CD4 and BRTC; these interactions induce proteasomal degradation of CD4. Interacts with host BST2; this interaction leads to the degradation of host BST2. Interacts with host FBXW11. Interacts with host AP1M1; this interaction plays a role in the mistrafficking and subsequent degradation of host BST2. Interacts with host RANBP2; this interaction allows Vpu to down-regulate host BLM sumoylation. Phosphorylated by host CK2. This phosphorylation is necessary for interaction with human BTRC and degradation of CD4.

The protein resides in the host membrane. Its activity is regulated as follows. Ion channel activity is inhibited by hexamethylene amiloride in vitro. In terms of biological role, enhances virion budding by targeting host CD4 and Tetherin/BST2 to proteasome degradation. Degradation of CD4 prevents any unwanted premature interactions between viral Env and its host receptor CD4 in the endoplasmic reticulum. Degradation of antiretroviral protein Tetherin/BST2 is important for virion budding, as BST2 tethers new viral particles to the host cell membrane. Mechanistically, Vpu bridges either CD4 or BST2 to BTRC, a substrate recognition subunit of the Skp1/Cullin/F-box protein E3 ubiquitin ligase, induces their ubiquitination and subsequent proteasomal degradation. The alteration of the E3 ligase specificity by Vpu seems to promote the degradation of host IKBKB, leading to NF-kappa-B down-regulation and subsequent apoptosis. Acts as a viroporin that forms an oligomeric ion channel in membranes. Modulates the host DNA repair mechanisms to promote degradation of nuclear viral cDNA in cells that are already productively infected in order to suppress immune sensing and proviral hyper-integration (superinfection). Manipulates PML-NBs and modulates SUMOylation of host BLM protein thereby enhancing its DNA-end processing activity toward viral unintegrated linear DNA. Also inhibits RAD52-mediated homologous repair of viral cDNA, preventing the generation of dead-end circular forms of single copies of the long terminal repeat and permitting sustained nucleolytic attack. The chain is Protein Vpu from Human immunodeficiency virus type 1 group M subtype B (isolate BH10) (HIV-1).